We begin with the raw amino-acid sequence, 178 residues long: uncharacterized protein (178 aa).

This is an uncharacterized protein from Sulfolobus islandicus filamentous virus (isolate Iceland/Hveragerdi) (SIFV).